Reading from the N-terminus, the 431-residue chain is Serine hydroxymethyltransferase (431 aa).

(6S)-5,6,7,8-tetrahydrofolate is bound by residues Leu126 and 130–132; that span reads GHL. Lys235 is subject to N6-(pyridoxal phosphate)lysine.

This sequence belongs to the SHMT family. Homodimer. Pyridoxal 5'-phosphate is required as a cofactor.

It localises to the cytoplasm. The enzyme catalyses (6R)-5,10-methylene-5,6,7,8-tetrahydrofolate + glycine + H2O = (6S)-5,6,7,8-tetrahydrofolate + L-serine. It functions in the pathway one-carbon metabolism; tetrahydrofolate interconversion. The protein operates within amino-acid biosynthesis; glycine biosynthesis; glycine from L-serine: step 1/1. In terms of biological role, catalyzes the reversible interconversion of serine and glycine with tetrahydrofolate (THF) serving as the one-carbon carrier. This reaction serves as the major source of one-carbon groups required for the biosynthesis of purines, thymidylate, methionine, and other important biomolecules. Also exhibits THF-independent aldolase activity toward beta-hydroxyamino acids, producing glycine and aldehydes, via a retro-aldol mechanism. The chain is Serine hydroxymethyltransferase from Nocardia farcinica (strain IFM 10152).